A 454-amino-acid polypeptide reads, in one-letter code: DNA primase small subunit (454 aa).

Residues E66, D131, and D133 contribute to the active site. Residues D131 and D133 each coordinate Mg(2+). Positions 131 and 133 each coordinate Mn(2+). Residue 131-133 coordinates a ribonucleoside 5'-triphosphate; sequence DID. Zn(2+) is bound by residues C143, C144, C150, and C153. Residues 143–153 carry the Zinc knuckle motif motif; the sequence is CCSKTNICEKC. 182–188 contributes to the a ribonucleoside 5'-triphosphate binding site; the sequence is SGRRGIH. D333 contacts Mg(2+). D333 is a binding site for Mn(2+). An a ribonucleoside 5'-triphosphate-binding site is contributed by 342–345; it reads HLLK. The tract at residues 385-420 is disordered; it reads DKNSQNDNGHGPTMETNTTENQKDNARGQSNKGHGF. Polar residues-rich tracts occupy residues 389-404 and 411-420; these read QNDN…NTTE and RGQSNKGHGF.

Belongs to the eukaryotic-type primase small subunit family. Heterodimer of a catalytic subunit spp1/pri1 and a regulatory subunit spp2/pri2, also known as the DNA primase complex. Component of the alpha DNA polymerase complex (also known as the alpha DNA polymerase-primase complex) consisting of four subunits: the catalytic subunit pol1, the accessory subunit spb70/pol12, and the primase complex subunits spp1/pri1 and spp2/pri2 respectively. Mg(2+) is required as a cofactor. It depends on Mn(2+) as a cofactor.

It is found in the nucleus. The enzyme catalyses ssDNA + n NTP = ssDNA/pppN(pN)n-1 hybrid + (n-1) diphosphate.. Catalytic subunit of the DNA primase complex and component of the DNA polymerase alpha complex (also known as the alpha DNA polymerase-primase complex - primosome/replisome) which play an essential role in the initiation of DNA synthesis. During the S phase of the cell cycle, the DNA polymerase alpha complex (composed of a catalytic subunit pol1, an accessory subunit spb70/pol12 and two primase subunits, the catalytic subunit spp1/pri1 and the regulatory subunit spp2/pri2) is recruited to DNA at the replicative forks. The primase subunit of the polymerase alpha complex initiates DNA synthesis by oligomerising short RNA primers on both leading and lagging strands. In Schizosaccharomyces pombe (strain 972 / ATCC 24843) (Fission yeast), this protein is DNA primase small subunit.